Consider the following 545-residue polypeptide: Chaperonin GroEL 2 (545 aa).

ATP is bound by residues 29–32 (TLGP), 86–90 (DGTTT), Gly-413, 477–479 (DAA), and Asp-493. The segment at 526-545 (PEPAAAGHGHGHGHQHGPGF) is disordered. Positions 534-545 (GHGHGHQHGPGF) are enriched in basic residues.

Belongs to the chaperonin (HSP60) family. As to quaternary structure, forms a cylinder of 14 subunits composed of two heptameric rings stacked back-to-back. Interacts with the co-chaperonin GroES.

Its subcellular location is the cytoplasm. The enzyme catalyses ATP + H2O + a folded polypeptide = ADP + phosphate + an unfolded polypeptide.. Functionally, together with its co-chaperonin GroES, plays an essential role in assisting protein folding. The GroEL-GroES system forms a nano-cage that allows encapsulation of the non-native substrate proteins and provides a physical environment optimized to promote and accelerate protein folding. In Salinispora arenicola (strain CNS-205), this protein is Chaperonin GroEL 2.